The primary structure comprises 384 residues: Ferrochelatase, mitochondrial (384 aa).

[2Fe-2S] cluster is bound at residue C156. Residues H190 and N343 contribute to the active site. Residues C363, C366, and C371 each contribute to the [2Fe-2S] cluster site.

It belongs to the ferrochelatase family. In terms of assembly, homodimer. Homotetramer. It depends on [2Fe-2S] cluster as a cofactor.

Its subcellular location is the mitochondrion inner membrane. The enzyme catalyses heme b + 2 H(+) = protoporphyrin IX + Fe(2+). The protein operates within porphyrin-containing compound metabolism; protoheme biosynthesis; protoheme from protoporphyrin-IX: step 1/1. In terms of biological role, catalyzes the ferrous insertion into protoporphyrin IX. Terminal enzyme in heme biosynthesis. Contains four conserved cysteines that function as cluster ligands and play a crucial role in maintaining protein structure. This Drosophila melanogaster (Fruit fly) protein is Ferrochelatase, mitochondrial.